We begin with the raw amino-acid sequence, 751 residues long: Photosystem I P700 chlorophyll a apoprotein A1 (751 aa).

Helical transmembrane passes span 73-96, 159-182, 198-222, 294-312, 349-372, 388-414, 436-458, and 533-551; these read IFSA…FHGA, LYST…FHYH, MNHH…HVSL, TAHH…GHMY, WHAQ…HHMY, LSLF…IFMV, AIIS…LYIH, and FLVH…LILL. [4Fe-4S] cluster contacts are provided by Cys-575 and Cys-584. Transmembrane regions (helical) follow at residues 591 to 612 and 665 to 687; these read HVFL…HFSW and LSAY…MFLF. His-676 contacts chlorophyll a'. Chlorophyll a-binding residues include Met-684 and Tyr-692. Trp-693 contributes to the phylloquinone binding site. A helical membrane pass occupies residues 725–745; it reads AVGVAHYLLGGIATTWAFFLA.

Belongs to the PsaA/PsaB family. As to quaternary structure, the PsaA/B heterodimer binds the P700 chlorophyll special pair and subsequent electron acceptors. PSI consists of a core antenna complex that captures photons, and an electron transfer chain that converts photonic excitation into a charge separation. The eukaryotic PSI reaction center is composed of at least 11 subunits. P700 is a chlorophyll a/chlorophyll a' dimer, A0 is one or more chlorophyll a, A1 is one or both phylloquinones and FX is a shared 4Fe-4S iron-sulfur center. is required as a cofactor.

The protein resides in the plastid. It is found in the chloroplast thylakoid membrane. It catalyses the reaction reduced [plastocyanin] + hnu + oxidized [2Fe-2S]-[ferredoxin] = oxidized [plastocyanin] + reduced [2Fe-2S]-[ferredoxin]. In terms of biological role, psaA and PsaB bind P700, the primary electron donor of photosystem I (PSI), as well as the electron acceptors A0, A1 and FX. PSI is a plastocyanin/cytochrome c6-ferredoxin oxidoreductase, converting photonic excitation into a charge separation, which transfers an electron from the donor P700 chlorophyll pair to the spectroscopically characterized acceptors A0, A1, FX, FA and FB in turn. Oxidized P700 is reduced on the lumenal side of the thylakoid membrane by plastocyanin or cytochrome c6. The polypeptide is Photosystem I P700 chlorophyll a apoprotein A1 (Nephroselmis olivacea (Green alga)).